The primary structure comprises 346 residues: MTASTNTLTITRPDDWHLHVRDGEAMRSVVPHTAAQFARAIIMPNLKPPVTTAEQALEYKQRILSAVPEGMAFEPLMTLYLTDNLPPEEIVRAKAAGVVACKLYPAGATTNSDHGVTDLRKIYPTLEAMQREGLLLLVHGEVTSSDIDLFDREAAFIDQHLIPLRRDFPELKIVFEHITTREAAQYVTEADRFVGATITPQHLLFNRNAIFTGGIRPHYYCLPVLKRETHRLALVEAATSGLPKFFLGTDSAPHAAHLKEHATGCAGCYSAHAAIEMYAEAFDNAGALDKLEAFASFNGPDFYSLPRNTGKITLVRESWTPPDSFAFGEAQLKPLRSGEALPWKLV.

Residues histidine 17 and histidine 19 each coordinate Zn(2+). Substrate is bound by residues 19–21 (HVR) and asparagine 45. Zn(2+) contacts are provided by lysine 102, histidine 139, and histidine 177. Lysine 102 is subject to N6-carboxylysine. Substrate is bound at residue histidine 139. Leucine 222 contributes to the substrate binding site. A Zn(2+)-binding site is contributed by aspartate 250. Aspartate 250 is an active-site residue. Residues histidine 254 and alanine 266 each coordinate substrate.

The protein belongs to the metallo-dependent hydrolases superfamily. DHOase family. Class II DHOase subfamily. Homodimer. Zn(2+) serves as cofactor.

The catalysed reaction is (S)-dihydroorotate + H2O = N-carbamoyl-L-aspartate + H(+). It participates in pyrimidine metabolism; UMP biosynthesis via de novo pathway; (S)-dihydroorotate from bicarbonate: step 3/3. In terms of biological role, catalyzes the reversible cyclization of carbamoyl aspartate to dihydroorotate. The chain is Dihydroorotase from Delftia acidovorans (strain DSM 14801 / SPH-1).